A 385-amino-acid chain; its full sequence is MKIIKPTPIKRVGKHDRERRVLLGLVDYYIQTGKPVGSNTLKEAGFEDLSSATIRNYFAQLEEEGYLLQSHSSGGRIPTDLAYRIYAHAYLNTNEPYPKQNPFEAFKSFESKEIAIFLQEAAEKLSWETNCAVFLSAPRFDHDFIANLKLVPLDAYRCLCIIMTDFGVIKTEVMHLPVKLSSFGIKRIENYFHCRLTNLGEPENLEPEEETVAQTFYNELMLRYIVGYSNFIDVDLYRTGFSRLLFYSDFQDTNLLASSLSLFENAHSMRLLLKECKALNHLRFWIGDDLSSFANSSPRCSVLTIPYYINYKPVGAVGLLGPTRLPYRALFSLLKLFSDCISETVTKNVYKFKIDYRQPEQSLYLKKEESLLIGQSRFLIEDKRP.

It belongs to the HrcA family.

Its function is as follows. Negative regulator of class I heat shock genes (grpE-dnaK-dnaJ and groELS operons). Prevents heat-shock induction of these operons. In Protochlamydia amoebophila (strain UWE25), this protein is Heat-inducible transcription repressor HrcA.